Consider the following 493-residue polypeptide: Glutamyl-tRNA(Gln) amidotransferase subunit A (493 aa).

Catalysis depends on charge relay system residues Lys79 and Ser159. The Acyl-ester intermediate role is filled by Ser183.

This sequence belongs to the amidase family. GatA subfamily. In terms of assembly, heterotrimer of A, B and C subunits.

It catalyses the reaction L-glutamyl-tRNA(Gln) + L-glutamine + ATP + H2O = L-glutaminyl-tRNA(Gln) + L-glutamate + ADP + phosphate + H(+). Allows the formation of correctly charged Gln-tRNA(Gln) through the transamidation of misacylated Glu-tRNA(Gln) in organisms which lack glutaminyl-tRNA synthetase. The reaction takes place in the presence of glutamine and ATP through an activated gamma-phospho-Glu-tRNA(Gln). This chain is Glutamyl-tRNA(Gln) amidotransferase subunit A, found in Brucella abortus (strain S19).